The primary structure comprises 62 residues: Conotoxin Sr5.6 (62 aa).

The N-terminal stretch at methionine 1–alanine 22 is a signal peptide. A propeptide spanning residues glutamine 23–histidine 44 is cleaved from the precursor. Proline 61 carries the post-translational modification Proline amide.

It belongs to the conotoxin T superfamily. In terms of processing, contains 2 disulfide bonds that can be either 'C1-C3, C2-C4' or 'C1-C4, C2-C3', since these disulfide connectivities have been observed for conotoxins with cysteine framework V (for examples, see AC P0DQQ7 and AC P81755). Expressed by the venom duct.

It localises to the secreted. The polypeptide is Conotoxin Sr5.6 (Conus spurius (Alphabet cone)).